Here is a 558-residue protein sequence, read N- to C-terminus: Potassium-transporting ATPase potassium-binding subunit 1 (558 aa).

12 helical membrane passes run 1 to 21 (MEII…SGYL), 66 to 86 (FNGF…WLFL), 127 to 147 (MIVM…VCIA), 166 to 186 (IVRF…ILLM), 245 to 265 (IWSN…MLFL), 281 to 301 (ALIL…LTMW), 327 to 347 (FGAG…TGSV), 354 to 374 (LTPL…VFGG), 377 to 397 (VGLM…SLMV), 416 to 436 (IVLV…LAFM), 482 to 502 (ISTG…QLMI), and 531 to 551 (IVFI…LGPI).

Belongs to the KdpA family. The system is composed of three essential subunits: KdpA, KdpB and KdpC.

It is found in the cell membrane. Part of the high-affinity ATP-driven potassium transport (or Kdp) system, which catalyzes the hydrolysis of ATP coupled with the electrogenic transport of potassium into the cytoplasm. This subunit binds the extracellular potassium ions and delivers the ions to the membrane domain of KdpB through an intramembrane tunnel. The chain is Potassium-transporting ATPase potassium-binding subunit 1 from Staphylococcus aureus (strain MRSA252).